Here is a 373-residue protein sequence, read N- to C-terminus: ATP phosphoribosyltransferase regulatory subunit (373 aa).

Belongs to the class-II aminoacyl-tRNA synthetase family. HisZ subfamily. In terms of assembly, heteromultimer composed of HisG and HisZ subunits.

The protein resides in the cytoplasm. It functions in the pathway amino-acid biosynthesis; L-histidine biosynthesis; L-histidine from 5-phospho-alpha-D-ribose 1-diphosphate: step 1/9. Its function is as follows. Required for the first step of histidine biosynthesis. May allow the feedback regulation of ATP phosphoribosyltransferase activity by histidine. The protein is ATP phosphoribosyltransferase regulatory subunit of Rhizobium etli (strain ATCC 51251 / DSM 11541 / JCM 21823 / NBRC 15573 / CFN 42).